The chain runs to 274 residues: Siroheme biosynthesis protein MET8 (274 aa).

Residues 23 to 24 (EV), 43 to 45 (SPD), and Phe-93 contribute to the NAD(+) site. Catalysis depends on Asp-141, which acts as the Proton acceptor.

It belongs to the precorrin-2 dehydrogenase / sirohydrochlorin ferrochelatase family. MET8 subfamily. As to quaternary structure, homodimer.

It carries out the reaction precorrin-2 + NAD(+) = sirohydrochlorin + NADH + 2 H(+). The catalysed reaction is siroheme + 2 H(+) = sirohydrochlorin + Fe(2+). It participates in porphyrin-containing compound metabolism; siroheme biosynthesis; siroheme from sirohydrochlorin: step 1/1. The protein operates within porphyrin-containing compound metabolism; siroheme biosynthesis; sirohydrochlorin from precorrin-2: step 1/1. Its function is as follows. Catalyzes the conversion of precorrin-2 into siroheme. This reaction consist of the NAD-dependent oxidation of precorrin-2 into sirohydrochlorin and its subsequent ferrochelation into siroheme. The protein is Siroheme biosynthesis protein MET8 of Saccharomyces cerevisiae (strain ATCC 204508 / S288c) (Baker's yeast).